The sequence spans 473 residues: Fumarate hydratase class II 2 (473 aa).

Residues 1–28 are disordered; the sequence is MAKSARTKTARPATRTETDSFGPIEVPS. Substrate contacts are provided by residues 108 to 110, 139 to 142, 149 to 151, and T197; these read SGT, HPND, and SSN. H198 acts as the Proton donor/acceptor in catalysis. The active site involves S328. Substrate contacts are provided by residues S329 and 334–336; that span reads KVN.

It belongs to the class-II fumarase/aspartase family. Fumarase subfamily. In terms of assembly, homotetramer.

It localises to the cytoplasm. It catalyses the reaction (S)-malate = fumarate + H2O. Its pathway is carbohydrate metabolism; tricarboxylic acid cycle; (S)-malate from fumarate: step 1/1. Functionally, involved in the TCA cycle. Catalyzes the stereospecific interconversion of fumarate to L-malate. The chain is Fumarate hydratase class II 2 from Bradyrhizobium diazoefficiens (strain JCM 10833 / BCRC 13528 / IAM 13628 / NBRC 14792 / USDA 110).